Consider the following 163-residue polypeptide: Cyanate hydratase (163 aa).

Residues R103, E106, and S129 contribute to the active site.

The protein belongs to the cyanase family.

It carries out the reaction cyanate + hydrogencarbonate + 3 H(+) = NH4(+) + 2 CO2. Functionally, catalyzes the reaction of cyanate with bicarbonate to produce ammonia and carbon dioxide. This chain is Cyanate hydratase, found in Paracoccidioides lutzii (strain ATCC MYA-826 / Pb01) (Paracoccidioides brasiliensis).